The chain runs to 74 residues: ATP synthase subunit 9, mitochondrial (74 aa).

Transmembrane regions (helical) follow at residues 16-36 (GLIG…IGVS) and 50-70 (ILGF…AFLL).

The protein belongs to the ATPase C chain family. As to quaternary structure, F-type ATPases have 2 components, CF(1) - the catalytic core - and CF(0) - the membrane proton channel. CF(1) has five subunits: alpha(3), beta(3), gamma(1), delta(1), epsilon(1). CF(0) has three main subunits: a, b and c.

It is found in the mitochondrion inner membrane. Functionally, mitochondrial membrane ATP synthase (F(1)F(0) ATP synthase or Complex V) produces ATP from ADP in the presence of a proton gradient across the membrane which is generated by electron transport complexes of the respiratory chain. F-type ATPases consist of two structural domains, F(1) - containing the extramembraneous catalytic core and F(0) - containing the membrane proton channel, linked together by a central stalk and a peripheral stalk. During catalysis, ATP synthesis in the catalytic domain of F(1) is coupled via a rotary mechanism of the central stalk subunits to proton translocation. Part of the complex F(0) domain. A homomeric c-ring of probably 10 subunits is part of the complex rotary element. This Neurospora crassa (strain ATCC 24698 / 74-OR23-1A / CBS 708.71 / DSM 1257 / FGSC 987) protein is ATP synthase subunit 9, mitochondrial (atp-9).